The sequence spans 766 residues: MKEKSKNAARTRREKENSEFYELAKLLPLPSAITSQLDKASIIRLTTSYLKMRVVFPEGLGEAWGHSSWTSPLDNVGRELGSHLLQTLDGFIFVVAPDGKIMYISETASVHLGLSQVELTGNSIYEYIHPADHDEMTAVLTAHQPYHSHFVQEYEIERSFFLRMKCVLAKRNAGLTCGGYKVIHCSGYLKIRQYSLDMSPFDGCYQNVGLVAVGHSLPPSAVTEIKLHSNMFMFRASLDMKLIFLDSRVAELTGYEPQDLIEKTLYHHVHGCDTFHLRCAHHLLLVKGQVTTKYYRFLAKHGGWVWVQSYATIVHNSRSSRPHCIVSVNYVLTDTEYKGLQLSLDQISASKPAFSYTSSSTPTMTDNRKGAKSRLSSSKSKSRTSPYPQYSGFHTERSESDHDSQWGGSPLTDTASPQLLDPADRPGSQHDASCAYRQFSDRSSLCYGFALDHSRLVEERHFHTQACEGGRCEAGRYFLGTPQAGREPWWGSRAALPLTKASPESREAYENSMPHIASVHRIHGRGHWDEDSVVSSPDPGSASESGDRYRTEQYQSSPHEPSKIETLIRATQQMIKEEENRLQLRKAPSDQLASINGAGKKHSLCFANYQQPPPTGEICHGSALANTSPCDHIQQREGKMLSPHENDYDNSPTALSRISSPNSDRISKSSLILAKDYLHSDISSHQTAGDHPTVSPNCFGSHRQYLDKHAYTLTGYALEHLYDSETIRNYSLGCNGSHFDVTSHLRMQPDPAQGHKGTSVIITNGS.

Positions 1–53 (MKEKSKNAARTRREKENSEFYELAKLLPLPSAITSQLDKASIIRLTTSYLKMR) constitute a bHLH domain. PAS domains are found at residues 77-147 (GREL…QPYH) and 218-288 (PPSA…LVKG). Positions 292–335 (TKYYRFLAKHGGWVWVQSYATIVHNSRSSRPHCIVSVNYVLTDT) constitute a PAC domain. One can recognise a Single-minded C-terminal domain in the interval 336–766 (EYKGLQLSLD…GTSVIITNGS (431 aa)). The span at 353 to 365 (AFSYTSSSTPTMT) shows a compositional bias: polar residues. Disordered regions lie at residues 353–431 (AFSY…SQHD) and 528–563 (WDEDSVVSSPDPGSASESGDRYRTEQYQSSPHEPSK). The Nuclear localization signal motif lies at 368-387 (RKGAKSRLSSSKSKSRTSPY). Over residues 373-385 (SRLSSSKSKSRTS) the composition is skewed to low complexity. Residues 394 to 404 (HTERSESDHDS) show a composition bias toward basic and acidic residues.

Efficient DNA binding requires dimerization with another bHLH protein. Heterodimer; forms a heterodimer with ARNT, ARNT2.

It is found in the nucleus. Its function is as follows. Transcriptional factor that may have pleiotropic effects during embryogenesis and in the adult. The protein is Single-minded homolog 1 (SIM1) of Pan paniscus (Pygmy chimpanzee).